The chain runs to 82 residues: Cytochrome b559 subunit alpha (82 aa).

The helical transmembrane segment at 21–35 threads the bilayer; the sequence is VIHSITVPALFIAGW. His23 serves as a coordination point for heme.

This sequence belongs to the PsbE/PsbF family. Heterodimer of an alpha subunit and a beta subunit. PSII is composed of 1 copy each of membrane proteins PsbA, PsbB, PsbC, PsbD, PsbE, PsbF, PsbH, PsbI, PsbJ, PsbK, PsbL, PsbM, PsbT, PsbX, PsbY, PsbZ, Psb30/Ycf12, at least 3 peripheral proteins of the oxygen-evolving complex and a large number of cofactors. It forms dimeric complexes. Heme b serves as cofactor.

The protein resides in the plastid. The protein localises to the chloroplast thylakoid membrane. This b-type cytochrome is tightly associated with the reaction center of photosystem II (PSII). PSII is a light-driven water:plastoquinone oxidoreductase that uses light energy to abstract electrons from H(2)O, generating O(2) and a proton gradient subsequently used for ATP formation. It consists of a core antenna complex that captures photons, and an electron transfer chain that converts photonic excitation into a charge separation. This Chlamydomonas reinhardtii (Chlamydomonas smithii) protein is Cytochrome b559 subunit alpha.